Here is a 385-residue protein sequence, read N- to C-terminus: Methionine aminopeptidase 1 (385 aa).

A C6H2-type zinc finger spans residues 6–59; sequence TRVCETAGCSSEAKLQCPTCLKLGIQGSYFCSQECFKGSWATHKLLHKKAKDEK. Residues cysteine 9, cysteine 14, cysteine 22, cysteine 25, cysteine 36, cysteine 40, histidine 48, and histidine 52 each coordinate Zn(2+). Histidine 203 provides a ligand contact to a protein. Residues aspartate 220, aspartate 231, and histidine 294 each coordinate Zn(2+). Histidine 301 provides a ligand contact to a protein. The Zn(2+) site is built by glutamate 327 and glutamate 358.

It belongs to the peptidase M24A family. Methionine aminopeptidase type 1 subfamily. Associates with the 60S ribosomal subunit of the 80S translational complex. The cofactor is Zn(2+). Co(2+) is required as a cofactor. It depends on Mn(2+) as a cofactor. Fe(2+) serves as cofactor.

The protein localises to the cytoplasm. It catalyses the reaction Release of N-terminal amino acids, preferentially methionine, from peptides and arylamides.. Cotranslationally removes the N-terminal methionine from nascent proteins. The N-terminal methionine is often cleaved when the second residue in the primary sequence is small and uncharged (Met-Ala-, Cys, Gly, Pro, Ser, Thr, or Val). The sequence is that of Methionine aminopeptidase 1 (METAP1) from Gallus gallus (Chicken).